We begin with the raw amino-acid sequence, 290 residues long: ATP synthase gamma chain (290 aa).

The protein belongs to the ATPase gamma chain family. As to quaternary structure, F-type ATPases have 2 components, CF(1) - the catalytic core - and CF(0) - the membrane proton channel. CF(1) has five subunits: alpha(3), beta(3), gamma(1), delta(1), epsilon(1). CF(0) has three main subunits: a, b and c.

It is found in the cell inner membrane. Its function is as follows. Produces ATP from ADP in the presence of a proton gradient across the membrane. The gamma chain is believed to be important in regulating ATPase activity and the flow of protons through the CF(0) complex. The protein is ATP synthase gamma chain of Erythrobacter litoralis (strain HTCC2594).